The following is an 868-amino-acid chain: MVASAAAMDASKYVRYTPEQVEALERLYYECPKPSSLRRQQLVRECPALANVDPKQIKVWFQNRRCREKQRKESSRLQALNRKLTAMNKLLMEENDRLQKQVSQLVYDHGRHGVAAAGMMRRVPAFPPQAAAAAGHQLATATDTSCESVVTSGHHHQQQQHNVVQPPPRDASPAGLMSIAEETLTEFLSKATGTAVEWLQMPGMKPGPDSIGIIAISHGCAGVAARACGLVGMEPAKVAEILKDRPLWLRDCRSMDVVNVLPAGANGTIELLYMQLYAPTTLAPARDFWLLRYTSILDDGSLVVCERSLSSKQGGPSMPLVQPFIRGEMLPSGFLIRPSDVGGSVIHIVDHMDLEPWSVPEVVRPLYESSAMVAQKISMAALRYLRQVAHEDTRSVITGWGRQPAALRALSQKLTRGFNEALNGLADDGWSVIESDGVDDVCISVNSSKVIGCNATFSSGLPIVSTGVLCAKASMLLQDVSPPSLLQFLREHRSQWADSNLDAFFASTMKPNFCNLPMSRLGGFSGQVILPLAHTFEPEEFLEVIKLGNASNYQDTLVHRDLFLLQMYNGVEESSAGTCSELIFAPIDASFSDDSPLLPSGFRIIPIDSPLDTSSPNCTLDLASTLEAATPRSRISGVNGGGGGCAAAAASSSSKAVMTIAFQFAFDGHLQDSVAAMARQYMRNIISSVQRIAVALSSSRLVPPGAGAAAAQLSPVTPEAATLPRWICQSYRFHFGDELIKSVDANSSNESILKAVWHHPSAILCCSLKAMPVFTFANQSGLDMLETTLVALQDMTLEKVFDDQGRKNLCTELPNIMEQGMACMEGGVCVSSVGRAASYEKAVAWKVVDGDGGGAHCICFMFINWTFL.

A DNA-binding region (homeobox) is located at residues 9–72 (DASKYVRYTP…NRRCREKQRK (64 aa)). Positions 64-106 (RRCREKQRKESSRLQALNRKLTAMNKLLMEENDRLQKQVSQLV) form a coiled coil. The segment at 150 to 171 (VTSGHHHQQQQHNVVQPPPRDA) is disordered. The START domain occupies 169–397 (RDASPAGLMS…VAHEDTRSVI (229 aa)).

The protein belongs to the HD-ZIP homeobox family. Class III subfamily. As to expression, expressed in phloem.

It localises to the nucleus. Functionally, probable transcription factor that may be necessary for the proper patterning of vascular bundles. The protein is Homeobox-leucine zipper protein HOX29 (HOX29) of Oryza sativa subsp. japonica (Rice).